The chain runs to 333 residues: Protoheme IX farnesyltransferase (333 aa).

The next 7 membrane-spanning stretches (helical) occupy residues 64 to 84, 110 to 130, 133 to 153, 161 to 181, 189 to 209, 246 to 266, and 287 to 307; these read LICT…LNCL, TVFL…ISGV, LAAG…TVIL, IVFG…AATG, WLFG…AILL, IMGV…LLPF, and AKSL…LLLI.

The protein belongs to the UbiA prenyltransferase family. Protoheme IX farnesyltransferase subfamily.

The protein localises to the cell inner membrane. The enzyme catalyses heme b + (2E,6E)-farnesyl diphosphate + H2O = Fe(II)-heme o + diphosphate. It functions in the pathway porphyrin-containing compound metabolism; heme O biosynthesis; heme O from protoheme: step 1/1. In terms of biological role, converts heme B (protoheme IX) to heme O by substitution of the vinyl group on carbon 2 of heme B porphyrin ring with a hydroxyethyl farnesyl side group. The sequence is that of Protoheme IX farnesyltransferase from Prochlorococcus marinus (strain MIT 9312).